Here is a 166-residue protein sequence, read N- to C-terminus: Antibacterial peptide PMAP-36 (166 aa).

The signal sequence occupies residues 1–29 (METQRASLCLGRWSLWLLLLGLVVPSASA). A propeptide spanning residues 30 to 129 (QALSYREAVL…LDINCDEIQS (100 aa)) is cleaved from the precursor. 2 disulfides stabilise this stretch: Cys85-Cys96 and Cys107-Cys124.

This sequence belongs to the cathelicidin family.

The protein resides in the secreted. In terms of biological role, exerts antimicrobial activity against both Gram-positive and negative bacteria. Its activity appears to be mediated by its ability to damage bacterial membranes. The protein is Antibacterial peptide PMAP-36 (PMAP36) of Sus scrofa (Pig).